Consider the following 479-residue polypeptide: Trigger factor (479 aa).

One can recognise a PPIase FKBP-type domain in the interval 174 to 261 (GDIAVVSFSG…LKELKTRELP (88 aa)). Residues 438–479 (VLESEAKTSKPAAKSKGSKTKSTKTKTNKANTEKPASDKSKS) form a disordered region. The span at 453 to 464 (KGSKTKSTKTKT) shows a compositional bias: basic residues. The span at 468–479 (NTEKPASDKSKS) shows a compositional bias: basic and acidic residues.

Belongs to the FKBP-type PPIase family. Tig subfamily.

Its subcellular location is the cytoplasm. The enzyme catalyses [protein]-peptidylproline (omega=180) = [protein]-peptidylproline (omega=0). Involved in protein export. Acts as a chaperone by maintaining the newly synthesized protein in an open conformation. Functions as a peptidyl-prolyl cis-trans isomerase. This is Trigger factor from Prochlorococcus marinus (strain MIT 9313).